A 37-amino-acid polypeptide reads, in one-letter code: Dolichyl-diphosphooligosaccharide--protein glycosyltransferase subunit 4B (37 aa).

Residues 1-8 (MFDDQDLG) lie on the Lumenal side of the membrane. A helical transmembrane segment spans residues 9–29 (FFANFLGIFIFVLVMAYHFVM). Topologically, residues 30–37 (ADVKYEGN) are cytoplasmic.

Belongs to the OST4 family. In terms of assembly, component of the oligosaccharyltransferase (OST) complex.

Its subcellular location is the endoplasmic reticulum membrane. In terms of biological role, subunit of the oligosaccharyl transferase (OST) complex that catalyzes the initial transfer of a defined glycan (Glc(3)Man(9)GlcNAc(2) in eukaryotes) from the lipid carrier dolichol-pyrophosphate to an asparagine residue within an Asn-X-Ser/Thr consensus motif in nascent polypeptide chains, the first step in protein N-glycosylation. N-glycosylation occurs cotranslationally and the complex associates with the Sec61 complex at the channel-forming translocon complex that mediates protein translocation across the endoplasmic reticulum (ER). All subunits are required for a maximal enzyme activity. The chain is Dolichyl-diphosphooligosaccharide--protein glycosyltransferase subunit 4B (OST4B) from Oryza sativa subsp. japonica (Rice).